Consider the following 428-residue polypeptide: Flotillin-2 (428 aa).

Gly-2 is lipidated: N-myristoyl glycine. Cys-4 is lipidated: S-palmitoyl cysteine; by ZDHHC5. Residue Cys-19 is the site of S-palmitoyl cysteine attachment. Cys-20 carries the S-palmitoyl cysteine; by ZDHHC5 lipid modification. At Ser-405 the chain carries Phosphoserine.

This sequence belongs to the band 7/mec-2 family. Flotillin subfamily. Heterooligomeric complex of flotillin-1 and flotillin-2 and caveolin-1 and caveolin-2. Interacts with ECPAS. Post-translationally, ZDHHC5-catalyzed palmitoylation predominantly occurs at Cys-4. ZDHHC5-catalyzed palmitoylation may be required for the formation of higher-order complexes and for neurite outgrowth in cultured neural stem cells. In terms of tissue distribution, in skin, expressed in epidermis and epidermal appendages but not in dermis. Expressed in all layers of the epidermis except the basal layer. In hair follicles, expressed in the suprabasal layer but not the basal layer. Also expressed in melanoma and carcinoma cell lines, fibroblasts and foreskin melanocytes.

It is found in the cell membrane. The protein localises to the membrane. The protein resides in the caveola. It localises to the endosome. In terms of biological role, may act as a scaffolding protein within caveolar membranes, functionally participating in formation of caveolae or caveolae-like vesicles. May be involved in epidermal cell adhesion and epidermal structure and function. This is Flotillin-2 (FLOT2) from Homo sapiens (Human).